We begin with the raw amino-acid sequence, 293 residues long: Eukaryotic translation initiation factor 3 subunit F (293 aa).

At Ala2 the chain carries N-acetylalanine. The MPN domain maps to 28-159 (ARIHPLVIFN…IKAFVSSNLS (132 aa)).

This sequence belongs to the eIF-3 subunit F family. As to quaternary structure, component of the eukaryotic translation initiation factor 3 (eIF-3) complex. Binds to TIF3E1 and TIF3H1. In terms of tissue distribution, expressed in inflorescences, leaves, stems, siliques, roots and seedlings. Accumulates at highly levels in pollen grains, developing embryos and root tips.

Its subcellular location is the cytoplasm. In terms of biological role, component of the eukaryotic translation initiation factor 3 (eIF-3) complex, which is involved in protein synthesis of a specialized repertoire of mRNAs and, together with other initiation factors, stimulates binding of mRNA and methionyl-tRNAi to the 40S ribosome. The eIF-3 complex specifically targets and initiates translation of a subset of mRNAs involved in cell proliferation (Potential). Involved in cell growth and differentiation, especially during embryogenesis and male gametophyte germination. Regulates sensitivity to sugars (e.g. sucrose). The sequence is that of Eukaryotic translation initiation factor 3 subunit F (TIF3F1) from Arabidopsis thaliana (Mouse-ear cress).